A 519-amino-acid chain; its full sequence is Histidine ammonia-lyase (519 aa).

The 5-imidazolinone (Ala-Gly) cross-link spans 146–148 (ASG). 2,3-didehydroalanine (Ser) is present on serine 147.

The protein belongs to the PAL/histidase family. Contains an active site 4-methylidene-imidazol-5-one (MIO), which is formed autocatalytically by cyclization and dehydration of residues Ala-Ser-Gly.

The protein localises to the cytoplasm. It catalyses the reaction L-histidine = trans-urocanate + NH4(+). It functions in the pathway amino-acid degradation; L-histidine degradation into L-glutamate; N-formimidoyl-L-glutamate from L-histidine: step 1/3. The chain is Histidine ammonia-lyase from Bradyrhizobium diazoefficiens (strain JCM 10833 / BCRC 13528 / IAM 13628 / NBRC 14792 / USDA 110).